The chain runs to 2594 residues: Immunoglobulin superfamily member 10 (2594 aa).

A signal peptide spans 1–25 (MQKRGREVSCLLISLTAICLVVTPG). In terms of domain architecture, LRRNT spans 29-56 (CPRRCACYVPTEVHCTFRYLTSIPDGIP). LRR repeat units lie at residues 58–79 (NVER…DFSG), 82–103 (RLEL…TFSG), 106–127 (SLQV…TLYG), 130–151 (SLTR…AFYG), 154–175 (LLRL…TFVS), and 186–207 (FIKY…MVSS). Residues 219 to 281 (NPWTCDCHLK…VPSGSFLCTK (63 aa)) form the LRRCT domain. Residue Asn439 is glycosylated (N-linked (GlcNAc...) asparagine). 2 consecutive Ig-like C2-type domains span residues 461 to 567 (PKAE…YRIT) and 571 to 661 (PYVE…FQVS). Disulfide bonds link Cys497–Cys551 and Cys595–Cys645. Residue Asn627 is glycosylated (N-linked (GlcNAc...) asparagine). Residues 670-685 (IEHDRDIDGSGLEEPK) show a composition bias toward basic and acidic residues. Disordered stretches follow at residues 670–725 (IEHD…RDLT) and 963–1008 (VSSN…GRER). The span at 715-725 (IHKKNKHRDLT) shows a compositional bias: basic residues. Positions 972-984 (TTKDPGFSKRPSD) are enriched in basic and acidic residues. A compositionally biased stretch (polar residues) spans 985–1003 (SHTTAPSLFQTPRNNSTGN). Asn1044 is a glycosylation site (N-linked (GlcNAc...) asparagine). Disordered regions lie at residues 1228–1251 (TATK…PSTT), 1333–1364 (VRSK…GYST), and 1428–1457 (SQES…PSPP). Positions 1333-1342 (VRSKKAKDQT) are enriched in basic and acidic residues. A compositionally biased stretch (polar residues) spans 1355-1364 (TPRQISGYST). Ig-like C2-type domains lie at 1619 to 1710 (PRII…VTLS), 1715 to 1807 (PARI…VKIQ), 1812 to 1901 (PPVI…RRVV), 1912 to 2005 (PRIE…VRLR), 2008 to 2106 (PAKI…VHLT), 2112 to 2200 (PRIR…YKLD), 2205 to 2302 (PPLI…LKVL), 2308 to 2398 (PTFR…ILLE), 2403 to 2493 (PVIL…VPVT), and 2499 to 2592 (PRII…TYIQ). 3 disulfide bridges follow: Cys1641–Cys1694, Cys1738–Cys1791, and Cys1835–Cys1888. Residues 1658–1681 (SGREISRGIQKTRFHVLPNGTLSI) form an LRR 11 repeat. N-linked (GlcNAc...) asparagine glycosylation is found at Asn1676, Asn1780, Asn1870, and Asn1933. Cystine bridges form between Cys1934–Cys1987, Cys2031–Cys2090, Cys2134–Cys2184, Cys2232–Cys2284, Cys2330–Cys2382, Cys2425–Cys2477, and Cys2521–Cys2576. The N-linked (GlcNAc...) asparagine glycan is linked to Asn2072. Residue Asn2364 is glycosylated (N-linked (GlcNAc...) asparagine). Residue Tyr2574 is modified to Phosphotyrosine.

As to expression, in the embryo, expressed in the nasal mesenchyme.

The protein localises to the secreted. Its function is as follows. Involved in the control of early migration of neurons expressing gonadotropin-releasing hormone (GNRH neurons). May be involved in the maintenance of osteochondroprogenitor cells pool. This is Immunoglobulin superfamily member 10 (Igsf10) from Mus musculus (Mouse).